The chain runs to 198 residues: COMM domain-containing protein 9 (198 aa).

Residue alanine 2 is modified to N-acetylalanine. The COMM domain occupies 122 to 196; the sequence is RLVDLDWRVD…RIRDQLSAVA (75 aa).

The protein belongs to the COMM domain-containing protein 9 family. Component of the commander complex consisting of the CCC subcomplex and the retriever subcomplex. Component of the CCC (COMMD/CCDC22/CCDC93) subcomplex consisting of COMMD1, COMMD2, COMMD3, COMMD4, COMMD5, COMMD6, COMMD7, COMMD8, COMMD9, COMMD10, CCDC22 and CCDC93; within the complex forms a heterodimer with COMMD7. Interacts with RELB and NFKB1/p105. Interacts with CCDC22, CCDC93, SCNN1B, CUL1.

It localises to the nucleus. It is found in the cytoplasmic vesicle. Its function is as follows. Scaffold protein in the commander complex that is essential for endosomal recycling of transmembrane cargos; the commander complex is composed of the CCC subcomplex and the retriever subcomplex. May modulate activity of cullin-RING E3 ubiquitin ligase (CRL) complexes. May down-regulate activation of NF-kappa-B. Modulates Na(+) transport in epithelial cells by regulation of apical cell surface expression of amiloride-sensitive sodium channel (ENaC) subunits. The chain is COMM domain-containing protein 9 (COMMD9) from Bos taurus (Bovine).